We begin with the raw amino-acid sequence, 313 residues long: UDP-N-acetylenolpyruvoylglucosamine reductase (313 aa).

Positions 31–207 constitute an FAD-binding PCMH-type domain; it reads VGGPADALVA…TGVDLGLGFD (177 aa). Residue R180 is part of the active site. C236 acts as the Proton donor in catalysis. E307 is a catalytic residue.

It belongs to the MurB family. The cofactor is FAD.

It is found in the cytoplasm. The enzyme catalyses UDP-N-acetyl-alpha-D-muramate + NADP(+) = UDP-N-acetyl-3-O-(1-carboxyvinyl)-alpha-D-glucosamine + NADPH + H(+). Its pathway is cell wall biogenesis; peptidoglycan biosynthesis. Cell wall formation. The sequence is that of UDP-N-acetylenolpyruvoylglucosamine reductase from Desulfosudis oleivorans (strain DSM 6200 / JCM 39069 / Hxd3) (Desulfococcus oleovorans).